The sequence spans 212 residues: ATP-dependent dethiobiotin synthetase BioD (212 aa).

Residue 12 to 17 (DCGKTF) coordinates ATP. Threonine 16 lines the Mg(2+) pocket. Lysine 33 is an active-site residue. Serine 37 is a binding site for substrate. ATP-binding positions include aspartate 50, 110-113 (EGAG), and 170-171 (NC). Residues aspartate 50 and glutamate 110 each contribute to the Mg(2+) site.

It belongs to the dethiobiotin synthetase family. Homodimer. The cofactor is Mg(2+).

Its subcellular location is the cytoplasm. It carries out the reaction (7R,8S)-7,8-diammoniononanoate + CO2 + ATP = (4R,5S)-dethiobiotin + ADP + phosphate + 3 H(+). It participates in cofactor biosynthesis; biotin biosynthesis; biotin from 7,8-diaminononanoate: step 1/2. Functionally, catalyzes a mechanistically unusual reaction, the ATP-dependent insertion of CO2 between the N7 and N8 nitrogen atoms of 7,8-diaminopelargonic acid (DAPA, also called 7,8-diammoniononanoate) to form a ureido ring. The sequence is that of ATP-dependent dethiobiotin synthetase BioD from Legionella pneumophila (strain Paris).